The sequence spans 357 residues: A-type ATP synthase subunit C (357 aa).

It belongs to the V-ATPase V0D/AC39 subunit family. In terms of assembly, has multiple subunits with at least A(3), B(3), C, D, E, F, H, I and proteolipid K(x).

Its subcellular location is the cell membrane. Component of the A-type ATP synthase that produces ATP from ADP in the presence of a proton gradient across the membrane. The polypeptide is A-type ATP synthase subunit C (Methanococcoides burtonii (strain DSM 6242 / NBRC 107633 / OCM 468 / ACE-M)).